A 418-amino-acid polypeptide reads, in one-letter code: Enolase (418 aa).

A (2R)-2-phosphoglycerate-binding site is contributed by Q162. E204 serves as the catalytic Proton donor. Mg(2+) contacts are provided by D241, E283, and D309. Residues K334, R363, S364, and K385 each contribute to the (2R)-2-phosphoglycerate site. The active-site Proton acceptor is K334.

It belongs to the enolase family. Mg(2+) serves as cofactor.

Its subcellular location is the cytoplasm. It localises to the secreted. It is found in the cell surface. The enzyme catalyses (2R)-2-phosphoglycerate = phosphoenolpyruvate + H2O. It participates in carbohydrate degradation; glycolysis; pyruvate from D-glyceraldehyde 3-phosphate: step 4/5. Its function is as follows. Catalyzes the reversible conversion of 2-phosphoglycerate (2-PG) into phosphoenolpyruvate (PEP). It is essential for the degradation of carbohydrates via glycolysis. The sequence is that of Enolase from Pelagibacter ubique (strain HTCC1062).